An 846-amino-acid chain; its full sequence is DNA mismatch repair protein MutS (846 aa).

G610 to S617 serves as a coordination point for ATP.

The protein belongs to the DNA mismatch repair MutS family.

Functionally, this protein is involved in the repair of mismatches in DNA. It is possible that it carries out the mismatch recognition step. This protein has a weak ATPase activity. In Legionella pneumophila (strain Lens), this protein is DNA mismatch repair protein MutS.